Reading from the N-terminus, the 196-residue chain is DnaA initiator-associating protein DiaA (196 aa).

Residues 34–196 (LVQSLLNGNK…DNTLFPHQDD (163 aa)) enclose the SIS domain.

This sequence belongs to the SIS family. DiaA subfamily. As to quaternary structure, homotetramer; dimer of dimers.

Its function is as follows. Required for the timely initiation of chromosomal replication via direct interactions with the DnaA initiator protein. The protein is DnaA initiator-associating protein DiaA of Yersinia pseudotuberculosis serotype O:1b (strain IP 31758).